A 360-amino-acid polypeptide reads, in one-letter code: Phospho-N-acetylmuramoyl-pentapeptide-transferase (360 aa).

The next 10 helical transmembrane spans lie at 26 to 46, 74 to 94, 97 to 117, 134 to 154, 168 to 188, 199 to 219, 236 to 256, 263 to 283, 288 to 308, and 338 to 358; these read AILG…KLIE, MGGL…GDLG, YVWV…IDDY, YILQ…TAAN, VMPQ…VGSS, GLAI…AYLS, SGEL…FLWF, VFMG…IAVL, ILLV…ILQV, and VIVR…ATLK.

Belongs to the glycosyltransferase 4 family. MraY subfamily. It depends on Mg(2+) as a cofactor.

It is found in the cell inner membrane. It carries out the reaction UDP-N-acetyl-alpha-D-muramoyl-L-alanyl-gamma-D-glutamyl-meso-2,6-diaminopimeloyl-D-alanyl-D-alanine + di-trans,octa-cis-undecaprenyl phosphate = di-trans,octa-cis-undecaprenyl diphospho-N-acetyl-alpha-D-muramoyl-L-alanyl-D-glutamyl-meso-2,6-diaminopimeloyl-D-alanyl-D-alanine + UMP. It participates in cell wall biogenesis; peptidoglycan biosynthesis. In terms of biological role, catalyzes the initial step of the lipid cycle reactions in the biosynthesis of the cell wall peptidoglycan: transfers peptidoglycan precursor phospho-MurNAc-pentapeptide from UDP-MurNAc-pentapeptide onto the lipid carrier undecaprenyl phosphate, yielding undecaprenyl-pyrophosphoryl-MurNAc-pentapeptide, known as lipid I. The sequence is that of Phospho-N-acetylmuramoyl-pentapeptide-transferase from Shewanella baltica (strain OS195).